The following is a 504-amino-acid chain: Pre-mRNA-processing factor 19 (504 aa).

Residue Ser2 is modified to N-acetylserine. Residues Ser2–Ala73 form the U-box domain. The may mediate interaction with PSMC5 stretch occupies residues Ala68–Gly223. 4 positions are modified to N6-acetyllysine: Lys122, Lys179, Lys244, and Lys261. The WD 1 repeat unit spans residues Ala219–Thr259. WD repeat units lie at residues Gly262–Val301, Ala304–Thr345, Thr348–Asn387, Gly390–Thr429, Asp433–Thr472, and Glu473–Ser503.

Belongs to the WD repeat PRP19 family. Homotetramer. Component of activated, catalytic and post-catalytic spliceosomes. Component of the Prp19 complex/PRP19C/Nineteen complex/NTC and related complexes described as PRP19-CDC5L splicing complex and PSO4 complex. A homotetramer of PRPF19, CDC5L, PLRG1 and BCAS2 constitute the core of those complexes. The interaction with CDC5L, PLRG1 and BCAS2 is direct within this core complex. At least three less stably associated proteins CTNNBL1, CWC15 and HSPA8 are found in the Prp19 complex. The Prp19 complex associates with the spliceosome during its assembly and remodeling recruiting additional proteins. Component of the XAB2 complex, a multimeric protein complex composed of XAB2, PRPF19, AQR, ZNF830, ISY1, and PPIE. Interacts with CWC22 and EIF4A3 in an RNA-independent manner. Interacts with RPA1 and RPA2; the PRP19-CDC5L complex is recruited to the sites of DNA repair where it interacts with the replication protein A complex (RPA). Interacts with SETMAR; required for SETMAR recruitment to site of DNA damage. Interacts with U2AF2; the interaction is direct and recruits the Prp19 complex to RNA polymerase II C-terminal domain (CTD) and the pre-mRNA. Interacts with PRPF3. Interacts with APEX1, DNTT and PSMB4. Interacts with KNSTRN. Interacts with PSMC5. Isoform 2 (via N-terminus) interacts with PPIA. Isoform 2 does not interact with CDC5L. Interacts with KHDC4. Interacts with USB1. Interacts with DDX41. In terms of tissue distribution, expressed in white and brown adipose tissues, brain and to a lower extent in liver, kidney, muscle, lung and spleen (at protein level).

Its subcellular location is the nucleus. It localises to the nucleoplasm. The protein resides in the cytoplasm. The protein localises to the cytoskeleton. It is found in the spindle. Its subcellular location is the lipid droplet. The catalysed reaction is S-ubiquitinyl-[E2 ubiquitin-conjugating enzyme]-L-cysteine + [acceptor protein]-L-lysine = [E2 ubiquitin-conjugating enzyme]-L-cysteine + N(6)-ubiquitinyl-[acceptor protein]-L-lysine.. The protein operates within protein modification; protein ubiquitination. Functionally, ubiquitin-protein ligase which is a core component of several complexes mainly involved in pre-mRNA splicing and DNA repair. Required for pre-mRNA splicing as component of the spliceosome. Core component of the PRP19C/Prp19 complex/NTC/Nineteen complex which is part of the spliceosome and participates in its assembly, its remodeling and is required for its activity. During assembly of the spliceosome, mediates 'Lys-63'-linked polyubiquitination of the U4 spliceosomal protein PRPF3. Ubiquitination of PRPF3 allows its recognition by the U5 component PRPF8 and stabilizes the U4/U5/U6 tri-snRNP spliceosomal complex. Recruited to RNA polymerase II C-terminal domain (CTD) and the pre-mRNA, it may also couple the transcriptional and spliceosomal machineries. The XAB2 complex, which contains PRPF19, is also involved in pre-mRNA splicing, transcription and transcription-coupled repair. Beside its role in pre-mRNA splicing PRPF19, as part of the PRP19-CDC5L complex, plays a role in the DNA damage response/DDR. It is recruited to the sites of DNA damage by the RPA complex where PRPF19 directly ubiquitinates RPA1 and RPA2. 'Lys-63'-linked polyubiquitination of the RPA complex allows the recruitment of the ATR-ATRIP complex and the activation of ATR, a master regulator of the DNA damage response. May also play a role in DNA double-strand break (DSB) repair by recruiting the repair factor SETMAR to altered DNA. As part of the PSO4 complex may also be involved in the DNA interstrand cross-links/ICLs repair process. In addition, may also mediate 'Lys-48'-linked polyubiquitination of substrates and play a role in proteasomal degradation. May play a role in the biogenesis of lipid droplets. May play a role in neural differentiation possibly through its function as part of the spliceosome. Its function is as follows. Forced expression leads to suppression of neuronal differentiation, and on the contrary to stimulation of astroglial cell differentiation in retinoic acid-primed P19 cells. The chain is Pre-mRNA-processing factor 19 from Mus musculus (Mouse).